A 1589-amino-acid chain; its full sequence is Paternally-expressed gene 3 protein (1589 aa).

One can recognise an SCAN box domain in the interval 46 to 128; the sequence is HQRFRNLIYV…TLLENYKEMY (83 aa). Disordered regions lie at residues 128 to 230, 266 to 306, and 319 to 349; these read YQPE…ESYQ, DGHS…RRGI, and KFIK…MSDD. Residues 129–142 are compositionally biased toward acidic residues; that stretch reads QPEDDNNSDVTSDD. 4 stretches are compositionally biased toward basic and acidic residues: residues 143–152, 161–182, 206–225, and 295–306; these read DMTRNRRESS, SGDR…DRWS, FEMD…RSQD, and PEAKKSTHRRGI. 3 C2H2-type zinc fingers span residues 454 to 476, 507 to 529, and 565 to 587; these read YVCD…QIMH, FECK…RKIH, and YECR…QKIH. Residues 588-607 are compositionally biased toward basic and acidic residues; that stretch reads FGDDKDNEREHERERERGET. The disordered stretch occupies residues 588 to 610; it reads FGDDKDNEREHERERERGETFRP. The C2H2-type 4 zinc-finger motif lies at 627–649; that stretch reads YECKVCGETFLHSSSLKEHQKIH. Residues 838 to 930 form a disordered region; the sequence is LVASKPPRSH…EFSVPSSNVR (93 aa). Basic and acidic residues predominate over residues 868 to 881; the sequence is LNDKRQKIPARENP. The C2H2-type 5 zinc finger occupies 969–991; it reads YECQECGECFAHSSDLTEHQKIH. Residues 1056 to 1104 form a disordered region; it reads EKSHGEESQGENTDGEETHSEETHGQETIEDPVIQSSDMEDPQKDDPDD. Residues 1071–1082 are compositionally biased toward basic and acidic residues; sequence EETHSEETHGQE. 5 C2H2-type zinc fingers span residues 1107–1129, 1163–1185, 1225–1247, 1282–1304, and 1332–1354; these read YECE…QKVH, YECP…QRIH, IRCL…MRLH, FECA…VTVH, and YECK…KELH. Residues 1396 to 1416 show a composition bias toward acidic residues; it reads AEPEVEAAEPEVEAAEPEVEA. The segment at 1396–1496 is disordered; it reads AEPEVEAAEP…GIEDPEEGED (101 aa). Repeat copies occupy residues 1398-1404, 1405-1411, 1412-1418, 1419-1423, 1426-1430, 1433-1437, and 1440-1444. Residues 1398–1418 are 3 X 7 AA repeat of P-E-V-E-A-A-E; the sequence is PEVEAAEPEVEAAEPEVEAAE. Residues 1419–1444 form a 4 X 5 AA repeat of P-X-G-E-A region; sequence PNGEAEGPDGEAAEPIGEAGQPNGEA. Composition is skewed to acidic residues over residues 1450-1467 and 1476-1496; these read DADE…ERAE and PEGD…EGED. 2 C2H2-type zinc fingers span residues 1506–1528 and 1565–1587; these read YDCH…LKTH and FKCD…QNTH.

This sequence belongs to the krueppel C2H2-type zinc-finger protein family. In terms of assembly, homodimer. Interacts with SIAH1A and SIAH2. Interacts with TRAF2.

The protein resides in the nucleus. It localises to the cytoplasm. In terms of biological role, induces apoptosis in cooperation with SIAH1A. Acts as a mediator between p53/TP53 and BAX in a neuronal death pathway that is activated by DNA damage. Acts synergistically with TRAF2 and inhibits TNF induced apoptosis through activation of NF-kappa-B. In Gorilla gorilla gorilla (Western lowland gorilla), this protein is Paternally-expressed gene 3 protein (PEG3).